We begin with the raw amino-acid sequence, 981 residues long: Colossin-C (981 aa).

A signal peptide spans 1–23; it reads MKILYSLLLISSIILNTVLNISS. An N-linked (GlcNAc...) asparagine glycan is attached at Asn-63. Residues 172-195 are disordered; sequence EQTQPPTQPPTQPPTQPPTPPPFT. The span at 177–194 shows a compositional bias: pro residues; that stretch reads PTQPPTQPPTQPPTPPPF. N-linked (GlcNAc...) asparagine glycans are attached at residues Asn-222, Asn-591, and Asn-811.

It belongs to the serine-aspartate repeat-containing protein (SDr) family.

It is found in the secreted. The polypeptide is Colossin-C (colC) (Dictyostelium discoideum (Social amoeba)).